We begin with the raw amino-acid sequence, 70 residues long: Bowman-Birk type proteinase inhibitor A7 (70 aa).

4 disulfides stabilise this stretch: Cys12–Cys31, Cys18–Cys29, Cys38–Cys45, and Cys42–Cys59.

This sequence belongs to the Bowman-Birk serine protease inhibitor family. Expressed in bulb (at protein level).

In terms of biological role, serine protease inhibitor. Strongly inhibits trypsin (Ki = 7.1 nM) and almost completely inhibits elastase. Also inhibits chymotrypsin (Ki = 19 nM). Does not inhibit bacterial subtilisin. The polypeptide is Bowman-Birk type proteinase inhibitor A7 (Hyacinthus orientalis (Common hyacinth)).